The chain runs to 200 residues: ATP-dependent Clp protease proteolytic subunit 2 (200 aa).

Ser100 functions as the Nucleophile in the catalytic mechanism.

The protein belongs to the peptidase S14 family. In terms of assembly, fourteen ClpP subunits assemble into 2 heptameric rings which stack back to back to give a disk-like structure with a central cavity, resembling the structure of eukaryotic proteasomes.

The protein localises to the cytoplasm. It catalyses the reaction Hydrolysis of proteins to small peptides in the presence of ATP and magnesium. alpha-casein is the usual test substrate. In the absence of ATP, only oligopeptides shorter than five residues are hydrolyzed (such as succinyl-Leu-Tyr-|-NHMec, and Leu-Tyr-Leu-|-Tyr-Trp, in which cleavage of the -Tyr-|-Leu- and -Tyr-|-Trp bonds also occurs).. In terms of biological role, cleaves peptides in various proteins in a process that requires ATP hydrolysis. Has a chymotrypsin-like activity. Plays a major role in the degradation of misfolded proteins. This is ATP-dependent Clp protease proteolytic subunit 2 from Streptomyces avermitilis (strain ATCC 31267 / DSM 46492 / JCM 5070 / NBRC 14893 / NCIMB 12804 / NRRL 8165 / MA-4680).